We begin with the raw amino-acid sequence, 102 residues long: MLARVAESVSCGLMGQVKTGLLLFDGSGFSDRLGVMRFYVWSSRIYVLVLVVQAQLILDAHNGVLFLLLFFLHNFFLLPQLFQFLLSGCLIFLNDVYFNLMV.

The next 2 membrane-spanning stretches (helical) occupy residues 38-58 (FYVW…QLIL) and 64-84 (VLFL…LFQF).

Its subcellular location is the membrane. This is an uncharacterized protein from Saccharomyces cerevisiae (strain ATCC 204508 / S288c) (Baker's yeast).